We begin with the raw amino-acid sequence, 300 residues long: tRNA pseudouridine synthase B (300 aa).

Asp-41 serves as the catalytic Nucleophile.

It belongs to the pseudouridine synthase TruB family. Type 1 subfamily.

The catalysed reaction is uridine(55) in tRNA = pseudouridine(55) in tRNA. In terms of biological role, responsible for synthesis of pseudouridine from uracil-55 in the psi GC loop of transfer RNAs. This is tRNA pseudouridine synthase B from Synechococcus sp. (strain WH7803).